The primary structure comprises 764 residues: Irregular chiasm C-roughest protein (764 aa).

The N-terminal stretch at 1-19 (MLHTMQLLLLATIVGMVRS) is a signal peptide. Over 20 to 533 (SPYTSYQNQR…QAKKSVSLLM (514 aa)) the chain is Extracellular. Ig-like C2-type domains lie at 21-120 (PYTS…PAIR), 132-230 (PEAP…AKIR), 237-343 (PKVK…LDIS), 346-419 (PSFR…AEIS), and 430-530 (PAIG…KSVS). 5 disulfides stabilise this stretch: Cys49-Cys107, Cys155-Cys214, Cys281-Cys325, Cys367-Cys408, and Cys450-Cys508. N-linked (GlcNAc...) asparagine glycosylation is found at Asn211, Asn313, Asn393, Asn400, and Asn507. Residues 534–556 (TIVGGISVVAFLLVLTILVVVYI) form a helical membrane-spanning segment. Topologically, residues 557-764 (KCKKRTKLPP…SSLLPPPTAV (208 aa)) are cytoplasmic. Disordered regions lie at residues 640–660 (HQNQLQLQQQQQQSHHQHHTQ) and 691–719 (NGLPSLQSTTASVVSSSPNGSCSNQSTTA). Positions 692 to 701 (GLPSLQSTTA) are enriched in polar residues. Residues 702–719 (SVVSSSPNGSCSNQSTTA) show a composition bias toward low complexity.

Postembryonic expression is strong in the developing optic lobe and in the eye imaginal disk.

It localises to the membrane. Required for correct axonal pathway formation in the optic lobe and for programmed cell death in the developing retina. The protein is Irregular chiasm C-roughest protein (rst) of Drosophila melanogaster (Fruit fly).